The following is a 232-amino-acid chain: MNQHPGIIGKKIGMTQIFNETGEVLRCTVVQAGCVVIGKRTLEKDGYSALILGLGERAEKHTTKPVAGAYKKSGQTPKRIVRELRCSPEHAAKYEIGTTLKVDEIFEVGQRVDAQGRSRGRGFSGVIRRWSFAGAVNSHGTHEYFRHGGSIGTNMTPGRTLPGLKMPGHYGDETVSALNLKIAKLLPEDNLILIEGPVPGPKNQVVTIRGAVKKRGGKGIVPVQQPTKKKGG.

The protein belongs to the universal ribosomal protein uL3 family. Part of the 50S ribosomal subunit. Forms a cluster with proteins L14 and L19.

In terms of biological role, one of the primary rRNA binding proteins, it binds directly near the 3'-end of the 23S rRNA, where it nucleates assembly of the 50S subunit. This Sorangium cellulosum (strain So ce56) (Polyangium cellulosum (strain So ce56)) protein is Large ribosomal subunit protein uL3.